A 185-amino-acid polypeptide reads, in one-letter code: Large ribosomal subunit protein uL5 (185 aa).

This sequence belongs to the universal ribosomal protein uL5 family. In terms of assembly, part of the 50S ribosomal subunit; part of the 5S rRNA/L5/L18/L25 subcomplex. Contacts the 5S rRNA and the P site tRNA. Forms a bridge to the 30S subunit in the 70S ribosome.

Its function is as follows. This is one of the proteins that bind and probably mediate the attachment of the 5S RNA into the large ribosomal subunit, where it forms part of the central protuberance. In the 70S ribosome it contacts protein S13 of the 30S subunit (bridge B1b), connecting the 2 subunits; this bridge is implicated in subunit movement. Contacts the P site tRNA; the 5S rRNA and some of its associated proteins might help stabilize positioning of ribosome-bound tRNAs. In Bradyrhizobium sp. (strain ORS 278), this protein is Large ribosomal subunit protein uL5.